The sequence spans 411 residues: Phosphoglycerate kinase (411 aa).

Residues D22–N24, R37, H60–R63, R123, and R165 each bind substrate. ATP contacts are provided by residues K216, E339, and G366 to S369.

This sequence belongs to the phosphoglycerate kinase family. As to quaternary structure, monomer.

Its subcellular location is the cytoplasm. It carries out the reaction (2R)-3-phosphoglycerate + ATP = (2R)-3-phospho-glyceroyl phosphate + ADP. The protein operates within carbohydrate degradation; glycolysis; pyruvate from D-glyceraldehyde 3-phosphate: step 2/5. This chain is Phosphoglycerate kinase (pgk), found in Mycoplasma genitalium (strain ATCC 33530 / DSM 19775 / NCTC 10195 / G37) (Mycoplasmoides genitalium).